We begin with the raw amino-acid sequence, 376 residues long: N-acetyldiaminopimelate deacetylase (376 aa).

The active site involves Asp69. The active-site Proton acceptor is Glu128.

The protein belongs to the peptidase M20A family. N-acetyldiaminopimelate deacetylase subfamily.

The enzyme catalyses N-acetyl-(2S,6S)-2,6-diaminopimelate + H2O = (2S,6S)-2,6-diaminopimelate + acetate. The protein operates within amino-acid biosynthesis; L-lysine biosynthesis via DAP pathway; LL-2,6-diaminopimelate from (S)-tetrahydrodipicolinate (acetylase route): step 3/3. Functionally, catalyzes the conversion of N-acetyl-diaminopimelate to diaminopimelate and acetate. The sequence is that of N-acetyldiaminopimelate deacetylase from Bacillus cereus (strain ATCC 14579 / DSM 31 / CCUG 7414 / JCM 2152 / NBRC 15305 / NCIMB 9373 / NCTC 2599 / NRRL B-3711).